The primary structure comprises 112 residues: Probable prefoldin subunit 1 (112 aa).

Belongs to the prefoldin subunit beta family. As to quaternary structure, heterohexamer of two PFD-alpha type and four PFD-beta type subunits.

Functionally, binds specifically to cytosolic chaperonin (c-CPN) and transfers target proteins to it. Binds to nascent polypeptide chain and promotes folding in an environment in which there are many competing pathways for nonnative proteins. In Schizosaccharomyces pombe (strain 972 / ATCC 24843) (Fission yeast), this protein is Probable prefoldin subunit 1.